The chain runs to 246 residues: RNA polymerase sigma-B factor (246 aa).

A Polymerase core binding motif is present at residues aspartate 25–valine 38. The H-T-H motif DNA-binding region spans leucine 201–isoleucine 220.

This sequence belongs to the sigma-70 factor family.

Sigma factors are initiation factors that promote the attachment of RNA polymerase to specific initiation sites and are then released. This sigma factor is essential for late-stage differentiation of M.xanthus. This Myxococcus xanthus protein is RNA polymerase sigma-B factor (sigB).